Here is a 559-residue protein sequence, read N- to C-terminus: Myb/SANT-like DNA-binding domain-containing protein 2 (559 aa).

The tract at residues 1–62 is disordered; that stretch reads MAAPCGSELP…GSAAGSGAAA (62 aa). A phosphoserine mark is found at S13, S24, S27, S32, and S48. Residues 46 to 61 show a composition bias toward low complexity; the sequence is GASPLGPGSAAGSGAA. Residues 103–173 form the Myb-like domain; the sequence is SWTPAETNAL…QCRERIKTLR (71 aa). Residues K268 and K343 each participate in a glycyl lysine isopeptide (Lys-Gly) (interchain with G-Cter in SUMO2) cross-link. S436 bears the Phosphoserine mark.

In Mus musculus (Mouse), this protein is Myb/SANT-like DNA-binding domain-containing protein 2 (Msantd2).